The primary structure comprises 784 residues: Toll-like receptor 2 (784 aa).

An N-terminal signal peptide occupies residues M1–G20. Over A21–R587 the chain is Extracellular. An intrachain disulfide couples C30 to C36. LRR repeat units lie at residues V54–N77, L78–N101, L102–V125, L126–N150, L151–F175, L176–N199, I200–S223, L224–S250, V251–G278, I279–N308, V309–K337, V338–S361, L362–F388, L389–N414, L415–K437, M438–Q457, T458–Q478, L479–V500, and L501–Q524. N114 carries N-linked (GlcNAc...) asparagine glycosylation. A glycan (N-linked (GlcNAc...) asparagine) is linked at N199. An intrachain disulfide couples C353 to C382. An intrachain disulfide couples C432 to C454. An N-linked (GlcNAc...) asparagine glycan is attached at N442. The 55-residue stretch at L525 to R579 folds into the LRRCT domain. Residues A588 to L608 traverse the membrane as a helical segment. The Cytoplasmic segment spans residues C609 to S784. Positions I639–I782 constitute a TIR domain. K754 is covalently cross-linked (Glycyl lysine isopeptide (Lys-Gly) (interchain with G-Cter in ubiquitin)). The ATG16L1-binding motif signature appears at Y761–L778.

Belongs to the Toll-like receptor family. In terms of assembly, interacts with LY96, TLR1 and TLR6 (via extracellular domain). TLR2 seems to exist in heterodimers with either TLR1 or TLR6 before stimulation by the ligand. The heterodimers form bigger oligomers in response to their corresponding ligands as well as further heterotypic associations with other receptors such as CD14 and/or CD36. Binds MYD88 (via TIR domain). Interacts with TICAM1. Interacts with CNPY3. Interacts with ATG16L1. Interacts with PPP1R11. Interacts with TICAM2. Interacts with TIRAP. Post-translationally, ubiquitinated at Lys-754 by PPP1R11, leading to its degradation. Deubiquitinated by USP2. In terms of processing, glycosylation of Asn-442 is critical for secretion of the N-terminal ectodomain of TLR2.

The protein localises to the membrane. It localises to the cytoplasmic vesicle. It is found in the phagosome membrane. Its subcellular location is the membrane raft. In terms of biological role, cooperates with LY96 to mediate the innate immune response to bacterial lipoproteins and other microbial cell wall components. Cooperates with TLR1 or TLR6 to mediate the innate immune response to bacterial lipoproteins or lipopeptides. Acts via MYD88 and TRAF6, leading to NF-kappa-B activation, cytokine secretion and the inflammatory response. May also promote apoptosis in response to lipoproteins. Forms activation clusters composed of several receptors depending on the ligand, these clusters trigger signaling from the cell surface and subsequently are targeted to the Golgi in a lipid-raft dependent pathway. Forms the cluster TLR2:TLR6:CD14:CD36 in response to diacylated lipopeptides and TLR2:TLR1:CD14 in response to triacylated lipopeptides. The protein is Toll-like receptor 2 (TLR2) of Bison bison (American bison).